The chain runs to 671 residues: Copper amine oxidase 1 (671 aa).

The interval 3 to 106 (PHPLAILSEE…QHRVVGKEHH (104 aa)) is N2. Residues 107–211 (ASLTLSEFDT…DRPATGGKGE (105 aa)) are N3. 319–330 (AFDFGDGGGGNM) contributes to the substrate binding site. Catalysis depends on D321, which acts as the Proton acceptor. The cysteines at positions 340 and 366 are disulfide-linked. 402–407 (LANYEY) provides a ligand contact to substrate. The Schiff-base intermediate with substrate; via topaquinone role is filled by Y405. Y405 carries the post-translational modification 2',4',5'-topaquinone. H455 and H457 together coordinate Cu cation. D464 is a binding site for Mn(2+). N-linked (GlcNAc...) asparagine glycosylation occurs at N471. Residue D606 participates in Mn(2+) binding. Residue H617 coordinates Cu cation.

It belongs to the copper/topaquinone oxidase family. As to quaternary structure, homodimer. Requires Cu cation as cofactor. Zn(2+) serves as cofactor. L-topaquinone is required as a cofactor. The cofactor is Mn(2+). Post-translationally, topaquinone (TPQ) is generated by copper-dependent autoxidation of a specific tyrosyl residue.

The catalysed reaction is histamine + O2 + H2O = imidazole-4-acetaldehyde + H2O2 + NH4(+). This chain is Copper amine oxidase 1 (AO-I), found in Aspergillus niger.